Here is a 79-residue protein sequence, read N- to C-terminus: Sec-independent protein translocase protein TatA (79 aa).

Residues 1–21 form a helical membrane-spanning segment; sequence MGEFSLTHILLLAVIFLIFFG. The disordered stretch occupies residues 52 to 79; it reads DIHDNQQVSHQNKQSMGQTQKQGENQNS. Residues 56–79 are compositionally biased toward polar residues; sequence NQQVSHQNKQSMGQTQKQGENQNS.

This sequence belongs to the TatA/E family. The Tat system comprises two distinct complexes: a TatABC complex, containing multiple copies of TatA, TatB and TatC subunits, and a separate TatA complex, containing only TatA subunits. Substrates initially bind to the TatABC complex, which probably triggers association of the separate TatA complex to form the active translocon.

The protein localises to the cell inner membrane. Functionally, part of the twin-arginine translocation (Tat) system that transports large folded proteins containing a characteristic twin-arginine motif in their signal peptide across membranes. TatA could form the protein-conducting channel of the Tat system. This is Sec-independent protein translocase protein TatA from Bdellovibrio bacteriovorus (strain ATCC 15356 / DSM 50701 / NCIMB 9529 / HD100).